A 420-amino-acid chain; its full sequence is Glutamate dehydrogenase (420 aa).

Lysine 105 is an active-site residue. 220–226 serves as a coordination point for NAD(+); it reads GYGNAGY.

The protein belongs to the Glu/Leu/Phe/Val dehydrogenases family. In terms of assembly, homohexamer.

It localises to the cytoplasm. It catalyses the reaction L-glutamate + NAD(+) + H2O = 2-oxoglutarate + NH4(+) + NADH + H(+). It carries out the reaction L-glutamate + NADP(+) + H2O = 2-oxoglutarate + NH4(+) + NADPH + H(+). This Pyrococcus horikoshii (strain ATCC 700860 / DSM 12428 / JCM 9974 / NBRC 100139 / OT-3) protein is Glutamate dehydrogenase (gdhA).